Consider the following 450-residue polypeptide: F-box protein KIB3 (450 aa).

The F-box domain occupies 20–50; that stretch reads DLVRLILERLSFVDFHRARCVSSTWYVASKS.

It localises to the cytoplasm. The protein localises to the nucleus. The protein resides in the nucleolus. In terms of biological role, component of SCF(ASK-cullin-F-box) E3 ubiquitin ligase complexes, which may mediate the ubiquitination and subsequent proteasomal degradation of target proteins. Required for brassinosteroid (BR) signal transduction. Mediates ASK7/BIN2/SK21 inactivation both by competing with substrate binding (e.g. BZR1) and by promoting its ubiquitination and subsequent proteasomal degradation. This is F-box protein KIB3 from Arabidopsis thaliana (Mouse-ear cress).